A 411-amino-acid polypeptide reads, in one-letter code: ATP-dependent Clp protease ATP-binding subunit ClpX (411 aa).

Residues 1–49 (MSDRDIRCSFCGRTQKEVKKLIAGPGVYICDECVKLAYDIIEEDEEEDV) enclose the ClpX-type ZB domain. Zn(2+) contacts are provided by C8, C11, C30, and C33. Position 115-122 (115-122 (PTGVGKTL)) interacts with ATP.

It belongs to the ClpX chaperone family. As to quaternary structure, component of the ClpX-ClpP complex. Forms a hexameric ring that, in the presence of ATP, binds to fourteen ClpP subunits assembled into a disk-like structure with a central cavity, resembling the structure of eukaryotic proteasomes.

In terms of biological role, ATP-dependent specificity component of the Clp protease. It directs the protease to specific substrates. Can perform chaperone functions in the absence of ClpP. This is ATP-dependent Clp protease ATP-binding subunit ClpX from Dictyoglomus thermophilum (strain ATCC 35947 / DSM 3960 / H-6-12).